The chain runs to 364 residues: Valine dehydrogenase (364 aa).

Residue lysine 91 is part of the active site. 191–197 (GVGKVGH) is a binding site for NAD(+).

It belongs to the Glu/Leu/Phe/Val dehydrogenases family. In terms of assembly, homodimer.

It localises to the cytoplasm. It carries out the reaction L-valine + NAD(+) + H2O = 3-methyl-2-oxobutanoate + NH4(+) + NADH + H(+). It functions in the pathway amino-acid degradation; L-valine degradation. Repressed in minimal medium by the presence of glucose and NH4(+), glycerol and NH4(+), or glycerol and asparagine. Its function is as follows. Oxidative deamination of branched-chain amino acids. Oxidizes L-valine and L-alpha-aminobutyric acid efficiently, and L-isoleucine and L-leucine less efficiently. Does not act on D-valine. The catabolism of L-valine is the major source of fatty acid precursors for macrolide biosynthesis and a vital source of antibiotic precursors. Uses NAD; no activity was found with NADP. The chain is Valine dehydrogenase (vdh) from Streptomyces coelicolor (strain ATCC BAA-471 / A3(2) / M145).